Here is a 214-residue protein sequence, read N- to C-terminus: GTP cyclohydrolase 1 (214 aa).

Zn(2+) is bound by residues cysteine 108, histidine 111, and cysteine 179.

This sequence belongs to the GTP cyclohydrolase I family. In terms of assembly, toroid-shaped homodecamer, composed of two pentamers of five dimers.

It carries out the reaction GTP + H2O = 7,8-dihydroneopterin 3'-triphosphate + formate + H(+). It functions in the pathway cofactor biosynthesis; 7,8-dihydroneopterin triphosphate biosynthesis; 7,8-dihydroneopterin triphosphate from GTP: step 1/1. This chain is GTP cyclohydrolase 1, found in Shewanella putrefaciens (strain CN-32 / ATCC BAA-453).